The sequence spans 289 residues: ATP synthase subunit a (289 aa).

A run of 6 helical transmembrane segments spans residues 43 to 63, 103 to 123, 160 to 180, 193 to 213, 232 to 252, and 259 to 279; these read AFHL…LLIF, VIAP…AVDL, FCVF…GGFI, IFVQ…TLIA, VFIL…GLGV, and AVFH…LTIV.

This sequence belongs to the ATPase A chain family. F-type ATPases have 2 components, CF(1) - the catalytic core - and CF(0) - the membrane proton channel. CF(1) has five subunits: alpha(3), beta(3), gamma(1), delta(1), epsilon(1). CF(0) has three main subunits: a(1), b(2) and c(9-12). The alpha and beta chains form an alternating ring which encloses part of the gamma chain. CF(1) is attached to CF(0) by a central stalk formed by the gamma and epsilon chains, while a peripheral stalk is formed by the delta and b chains.

It is found in the cell inner membrane. Its function is as follows. Key component of the proton channel; it plays a direct role in the translocation of protons across the membrane. This chain is ATP synthase subunit a, found in Pseudomonas putida (strain ATCC 700007 / DSM 6899 / JCM 31910 / BCRC 17059 / LMG 24140 / F1).